Consider the following 147-residue polypeptide: Bis(5'-nucleosyl)-tetraphosphatase [asymmetrical] (147 aa).

Residues 1–139 enclose the Nudix hydrolase domain; the sequence is MALRACGLII…EMKAALQEGH (139 aa). An N-acetylalanine modification is found at A2. Positions 43–64 match the Nudix box motif; sequence GHVEPGEDDLETALRETQEEAG.

It belongs to the Nudix hydrolase family. Requires a divalent metal cation as cofactor.

The enzyme catalyses P(1),P(4)-bis(5'-guanosyl) tetraphosphate + H2O = GMP + GTP + 2 H(+). It catalyses the reaction a 5'-end CoA-ribonucleoside in mRNA + H2O = a 5'-end phospho-adenosine-phospho-ribonucleoside in mRNA + (R)-4'-phosphopantetheine + 2 H(+). It carries out the reaction a 5'-end FAD-phospho-ribonucleoside in mRNA + H2O = a 5'-end phospho-adenosine-phospho-ribonucleoside in mRNA + FMN + 2 H(+). Its function is as follows. Catalyzes the asymmetric hydrolysis of diadenosine 5',5'''-P1,P4-tetraphosphate (Ap4A) to yield AMP and ATP. Exhibits decapping activity towards FAD-capped RNAs and dpCoA-capped RNAs in vitro. This Homo sapiens (Human) protein is Bis(5'-nucleosyl)-tetraphosphatase [asymmetrical] (NUDT2).